Consider the following 629-residue polypeptide: Embryonic polyadenylate-binding protein B (629 aa).

4 RRM domains span residues 11-89, 99-175, 191-268, and 294-370; these read ASLY…WSQR, GNVF…HFKS, TNVY…RAQK, and VNLY…LAQR. The PABC domain occupies 539–616; it reads QEPLTASLLA…AVAVLQAHQA (78 aa).

It belongs to the polyadenylate-binding protein type-1 family. Interacts with dazl in an RNA-independent manner. The C-terminus can self-associate and also interact with the C-terminus of pabpc1, independently of RNA. RRM 1 and RRM 2 interact with both eif4g1 and paip1, and the C-terminus also interacts with paip1. Prior to oocyte maturation, found in a complex with dazl and pum2 proteins and spdy1 mRNA; pum2 dissociates from the complex during maturation. Interacts with the translation termination factor sup35/erf3.

The protein localises to the cytoplasm. Binds and protects the poly(A) tail of mRNA with or without an AU-rich element (ARE) and prevents mRNA deadenylation. Stimulates the translation of mRNAs to which it is bound during early development. This Xenopus laevis (African clawed frog) protein is Embryonic polyadenylate-binding protein B (epabp-b).